Here is a 490-residue protein sequence, read N- to C-terminus: GTPase Der (490 aa).

EngA-type G domains follow at residues 3-166 (PVIA…PRDE) and 196-369 (IKIA…KSAV). Residues 9–16 (GRPNVGKS), 56–60 (DTGGI), 118–121 (NKID), 202–209 (GRPNVGKS), 249–253 (DTAGV), and 314–317 (NKWD) each bind GTP. The KH-like domain occupies 370 to 454 (TRWPTSRLTQ…PIRIEFKGGE (85 aa)). Positions 452–490 (GGENPYEGNKNTLTDRQVNKKRRMMSHHKKADKKRRDKR) are disordered. A compositionally biased stretch (basic residues) spans 470–490 (NKKRRMMSHHKKADKKRRDKR).

It belongs to the TRAFAC class TrmE-Era-EngA-EngB-Septin-like GTPase superfamily. EngA (Der) GTPase family. Associates with the 50S ribosomal subunit.

GTPase that plays an essential role in the late steps of ribosome biogenesis. The protein is GTPase Der of Pseudomonas syringae pv. syringae (strain B728a).